We begin with the raw amino-acid sequence, 132 residues long: Ribonuclease P protein component (132 aa).

Belongs to the RnpA family. As to quaternary structure, consists of a catalytic RNA component (M1 or rnpB) and a protein subunit.

The catalysed reaction is Endonucleolytic cleavage of RNA, removing 5'-extranucleotides from tRNA precursor.. Its function is as follows. RNaseP catalyzes the removal of the 5'-leader sequence from pre-tRNA to produce the mature 5'-terminus. It can also cleave other RNA substrates such as 4.5S RNA. The protein component plays an auxiliary but essential role in vivo by binding to the 5'-leader sequence and broadening the substrate specificity of the ribozyme. The protein is Ribonuclease P protein component of Marinomonas sp. (strain MWYL1).